The sequence spans 169 residues: Mitochondrial ATP-independent inner membrane protease subunit 1b (169 aa).

Active-site residues include Ser-47 and Lys-91.

The protein belongs to the peptidase S26 family. IMP1 subfamily. As to quaternary structure, heterodimer of 2 subunits, IMP1A/B and IMP12.

It localises to the mitochondrion inner membrane. Functionally, catalyzes the removal of transit peptides required for the targeting of proteins from the mitochondrial matrix, across the inner membrane, into the inter-membrane space. The sequence is that of Mitochondrial ATP-independent inner membrane protease subunit 1b from Arabidopsis thaliana (Mouse-ear cress).